The chain runs to 333 residues: Anthranilate phosphoribosyltransferase (333 aa).

Residues glycine 81, 84–85, threonine 89, 91–94, 109–117, and alanine 121 contribute to the 5-phospho-alpha-D-ribose 1-diphosphate site; these read GD, NIST, and KHGNRSVSS. Residue glycine 81 participates in anthranilate binding. A Mg(2+)-binding site is contributed by serine 93. Residue asparagine 112 participates in anthranilate binding. Arginine 167 contacts anthranilate. Aspartate 225 and glutamate 226 together coordinate Mg(2+).

The protein belongs to the anthranilate phosphoribosyltransferase family. As to quaternary structure, homodimer. Mg(2+) is required as a cofactor.

The enzyme catalyses N-(5-phospho-beta-D-ribosyl)anthranilate + diphosphate = 5-phospho-alpha-D-ribose 1-diphosphate + anthranilate. It functions in the pathway amino-acid biosynthesis; L-tryptophan biosynthesis; L-tryptophan from chorismate: step 2/5. Its function is as follows. Catalyzes the transfer of the phosphoribosyl group of 5-phosphorylribose-1-pyrophosphate (PRPP) to anthranilate to yield N-(5'-phosphoribosyl)-anthranilate (PRA). In Pasteurella multocida (strain Pm70), this protein is Anthranilate phosphoribosyltransferase.